The chain runs to 596 residues: NADH-quinone oxidoreductase subunit C/D (596 aa).

The NADH dehydrogenase I subunit C stretch occupies residues 1–186 (MVDIMCNDST…NPFILTKQKE (186 aa)). The NADH dehydrogenase I subunit D stretch occupies residues 210–596 (NFMFLNLGPN…IDFVMSDVDR (387 aa)).

It in the N-terminal section; belongs to the complex I 30 kDa subunit family. The protein in the C-terminal section; belongs to the complex I 49 kDa subunit family. In terms of assembly, NDH-1 is composed of 13 different subunits. Subunits NuoB, CD, E, F, and G constitute the peripheral sector of the complex.

It is found in the cell inner membrane. The enzyme catalyses a quinone + NADH + 5 H(+)(in) = a quinol + NAD(+) + 4 H(+)(out). In terms of biological role, NDH-1 shuttles electrons from NADH, via FMN and iron-sulfur (Fe-S) centers, to quinones in the respiratory chain. The immediate electron acceptor for the enzyme in this species is believed to be ubiquinone. Couples the redox reaction to proton translocation (for every two electrons transferred, four hydrogen ions are translocated across the cytoplasmic membrane), and thus conserves the redox energy in a proton gradient. The polypeptide is NADH-quinone oxidoreductase subunit C/D (Blochmanniella pennsylvanica (strain BPEN)).